We begin with the raw amino-acid sequence, 1071 residues long: ATP-dependent helicase/deoxyribonuclease subunit B (1071 aa).

The protein belongs to the helicase family. AddB/RexB type 2 subfamily. Heterodimer of AddA and RexB. Mg(2+) is required as a cofactor.

Functionally, the heterodimer acts as both an ATP-dependent DNA helicase and an ATP-dependent, dual-direction single-stranded exonuclease. Recognizes the chi site generating a DNA molecule suitable for the initiation of homologous recombination. This subunit has 5' -&gt; 3' nuclease activity but not helicase activity. This is ATP-dependent helicase/deoxyribonuclease subunit B from Streptococcus pyogenes serotype M1.